The sequence spans 70 residues: Large ribosomal subunit protein bL31 (70 aa).

Positions 16, 18, 37, and 40 each coordinate Zn(2+).

This sequence belongs to the bacterial ribosomal protein bL31 family. Type A subfamily. Part of the 50S ribosomal subunit. The cofactor is Zn(2+).

Its function is as follows. Binds the 23S rRNA. This is Large ribosomal subunit protein bL31 from Shewanella amazonensis (strain ATCC BAA-1098 / SB2B).